The primary structure comprises 424 residues: MGHTITEKIIADHAGKKEVFPGELVTAKIDLAMANDVTAPLSIKTLEKYGIEKVFDKDKIALVLSHFVPAKDIKSAEQAKIVRDFAKKHNIKWFFGEGEGIEHTLLPENGIVVPGDLVVGADSHTCTYGGIGAFSTGVGSTDLAYAMATGEIWLKVPESMKFIFYGKLNKWVSGKDLILYTIGQIGVDGALYRAMEFDGEAIRSLDVSQRLTIANMAIEAGGKSGIISPDEKTIEYVEKRAKKPYKIYQSDKDAHYVEVYEWDASSIEPMVAWPYLPSNVHPVSESTHITIDQAFIGSCTNGRIEDLRIAASILKGKKVHPYTRCVVIPASKNVYLQALHEGLVDIFIEAGCAVSTSTCGPCLGGHMGILAKGERCISTSNRNFPGRMGHPQSEAYLANPAVVAASAVLGRIAHPEEVASEVLV.

[4Fe-4S] cluster is bound by residues Cys-299, Cys-359, and Cys-362.

It belongs to the aconitase/IPM isomerase family. LeuC type 2 subfamily. As to quaternary structure, heterodimer of LeuC and LeuD. [4Fe-4S] cluster serves as cofactor.

The enzyme catalyses (2R,3S)-3-isopropylmalate = (2S)-2-isopropylmalate. It functions in the pathway amino-acid biosynthesis; L-leucine biosynthesis; L-leucine from 3-methyl-2-oxobutanoate: step 2/4. Functionally, catalyzes the isomerization between 2-isopropylmalate and 3-isopropylmalate, via the formation of 2-isopropylmaleate. In Hydrogenobaculum sp. (strain Y04AAS1), this protein is 3-isopropylmalate dehydratase large subunit.